A 315-amino-acid chain; its full sequence is Ribosomal protein L11 methyltransferase (315 aa).

S-adenosyl-L-methionine contacts are provided by Thr-164, Gly-185, Asp-207, and Asn-249.

Belongs to the methyltransferase superfamily. PrmA family.

It is found in the cytoplasm. The enzyme catalyses L-lysyl-[protein] + 3 S-adenosyl-L-methionine = N(6),N(6),N(6)-trimethyl-L-lysyl-[protein] + 3 S-adenosyl-L-homocysteine + 3 H(+). Its function is as follows. Methylates ribosomal protein L11. This Lactobacillus johnsonii (strain CNCM I-12250 / La1 / NCC 533) protein is Ribosomal protein L11 methyltransferase.